A 1161-amino-acid chain; its full sequence is Auxin response factor 19 (1161 aa).

Residues 1 to 20 (MMKQAQQQPPPPPASSAATT) are disordered. The TF-B3 DNA-binding region spans 154-256 (FCKTLTASDT…QLLLGIRRAN (103 aa)). The disordered stretch occupies residues 573 to 598 (NQMQQQHASSTQGQQPATSQPLLLPQ). The PB1 domain occupies 1027-1111 (RTFTKVYKRG…KCIRILSPQE (85 aa)).

Belongs to the ARF family. Homodimers and heterodimers. Expressed in roots, culms, leaves and young panicles.

The protein localises to the nucleus. Functionally, auxin response factors (ARFs) are transcriptional factors that bind specifically to the DNA sequence 5'-TGTCTC-3' found in the auxin-responsive promoter elements (AuxREs). The sequence is that of Auxin response factor 19 (ARF19) from Oryza sativa subsp. japonica (Rice).